The primary structure comprises 389 residues: Phospho-N-acetylmuramoyl-pentapeptide-transferase (389 aa).

10 helical membrane-spanning segments follow: residues 25–45 (RAVM…PWVI), 73–93 (TMGG…WADL), 97–117 (FIWI…VDDY), 134–154 (FFWQ…SVSE), 190–210 (VSYP…IVGS), 222–242 (GLVI…AYVM), 258–278 (GAGE…AFLW), 286–306 (VFMG…IAVI), 311–331 (IVLF…MLQV), and 366–386 (QVVV…LSSL).

Belongs to the glycosyltransferase 4 family. MraY subfamily. The cofactor is Mg(2+).

The protein resides in the cell inner membrane. The enzyme catalyses UDP-N-acetyl-alpha-D-muramoyl-L-alanyl-gamma-D-glutamyl-meso-2,6-diaminopimeloyl-D-alanyl-D-alanine + di-trans,octa-cis-undecaprenyl phosphate = di-trans,octa-cis-undecaprenyl diphospho-N-acetyl-alpha-D-muramoyl-L-alanyl-D-glutamyl-meso-2,6-diaminopimeloyl-D-alanyl-D-alanine + UMP. It participates in cell wall biogenesis; peptidoglycan biosynthesis. In terms of biological role, catalyzes the initial step of the lipid cycle reactions in the biosynthesis of the cell wall peptidoglycan: transfers peptidoglycan precursor phospho-MurNAc-pentapeptide from UDP-MurNAc-pentapeptide onto the lipid carrier undecaprenyl phosphate, yielding undecaprenyl-pyrophosphoryl-MurNAc-pentapeptide, known as lipid I. The chain is Phospho-N-acetylmuramoyl-pentapeptide-transferase from Polynucleobacter necessarius subsp. necessarius (strain STIR1).